A 660-amino-acid chain; its full sequence is Junctophilin-1 (660 aa).

Residues 1-638 (MTGGRFDFDD…EKEANSGPNS (638 aa)) are Cytoplasmic-facing. MORN repeat units follow at residues 14–36 (YCGG…KGQG), 38–59 (YSGS…SGNT), 60–82 (YQGY…KWMY), 106–128 (YEGT…DGGT), and 129–151 (YQGQ…PYGM). Residues Ser157, Ser216, and Ser220 each carry the phosphoserine modification. Residues 228 to 247 (SKSSISSKRSSVRSDAAMSR) form a disordered region. MORN repeat units lie at residues 281–303 (YMGE…NGMK) and 304–326 (YEGE…DGSK). The span at 437-454 (NPEEKVLEKPPSPKESPH) shows a compositional bias: basic and acidic residues. Residues 437–631 (NPEEKVLEKP…NDTCPSLEKE (195 aa)) form a disordered region. Ser452 is subject to Phosphoserine. A Phosphothreonine modification is found at Thr461. Ser465, Ser469, and Ser475 each carry phosphoserine. A compositionally biased stretch (low complexity) spans 466 to 477 (PESSPKQSHSPQ). Composition is skewed to basic and acidic residues over residues 562–571 (PPEDREDDRG) and 598–612 (VAKE…KKSE). A helical; Anchor for type IV membrane protein transmembrane segment spans residues 639 to 659 (IMIVLVMLLNIGLAILFVHFL).

The protein belongs to the junctophilin family. In terms of tissue distribution, specifically expressed in skeletal muscle. Weakly expressed in embryos and neonates. Abundant in young adult muscles.

Its subcellular location is the cell membrane. The protein localises to the endoplasmic reticulum membrane. It localises to the sarcoplasmic reticulum membrane. Functionally, junctophilins contribute to the formation of junctional membrane complexes (JMCs) which link the plasma membrane with the endoplasmic or sarcoplasmic reticulum in excitable cells. Provides a structural foundation for functional cross-talk between the cell surface and intracellular calcium release channels. JPH1 contributes to the construction of the skeletal muscle triad by linking the t-tubule (transverse-tubule) and SR (sarcoplasmic reticulum) membranes. The protein is Junctophilin-1 (Jph1) of Mus musculus (Mouse).